Reading from the N-terminus, the 49-residue chain is Large ribosomal subunit protein bL33 (49 aa).

The protein belongs to the bacterial ribosomal protein bL33 family.

In Clostridium perfringens (strain ATCC 13124 / DSM 756 / JCM 1290 / NCIMB 6125 / NCTC 8237 / Type A), this protein is Large ribosomal subunit protein bL33.